The primary structure comprises 357 residues: SrfA-induced gene J protein (357 aa).

The interval 1-29 (MGRVEDQIKDNYNSLSHEGERLNREAKIE) is disordered. A coiled-coil region spans residues 5-51 (EDQIKDNYNSLSHEGERLNREAKIESEKLKNNAKLDAKDMKKDIDES). Basic and acidic residues predominate over residues 17 to 29 (HEGERLNREAKIE). N-linked (GlcNAc...) asparagine glycosylation is found at asparagine 114, asparagine 157, and asparagine 172. Coiled coils occupy residues 150 to 177 (KNFK…SNKI) and 223 to 270 (DETK…DAIE). A helical membrane pass occupies residues 290 to 307 (IWGSIGLIGGATATSYLF).

The protein localises to the membrane. This is SrfA-induced gene J protein (sigJ) from Dictyostelium discoideum (Social amoeba).